Reading from the N-terminus, the 399-residue chain is uncharacterized protein (399 aa).

Polar residues predominate over residues 197 to 206; sequence ENSSASSVTS. The interval 197–224 is disordered; sequence ENSSASSVTSEECEQDVMDEQSAEDNEE. The span at 207–224 shows a compositional bias: acidic residues; it reads EECEQDVMDEQSAEDNEE.

This is an uncharacterized protein from Diadromus pulchellus (Parasitic wasp).